The following is a 549-amino-acid chain: Cytoplasmic trehalase (549 aa).

Substrate-binding positions include Arg168, 175-176 (WD), Asn212, 221-223 (RSQ), 292-294 (RDE), and Gly324. Active-site proton donor/acceptor residues include Asp326 and Glu509. Glu525 lines the substrate pocket.

The protein belongs to the glycosyl hydrolase 37 family. As to quaternary structure, monomer.

The protein resides in the cytoplasm. The catalysed reaction is alpha,alpha-trehalose + H2O = alpha-D-glucose + beta-D-glucose. It functions in the pathway glycan degradation; trehalose degradation; D-glucose from alpha,alpha-trehalose: step 1/1. Hydrolyzes trehalose to glucose. Could be involved, in cells returning to low osmolarity conditions, in the utilization of the accumulated cytoplasmic trehalose, which was synthesized in response to high osmolarity. The protein is Cytoplasmic trehalase of Escherichia coli O127:H6 (strain E2348/69 / EPEC).